The primary structure comprises 251 residues: Putative deaminase AgaI (251 aa).

Asp-86 functions as the Proton acceptor; for enolization step in the catalytic mechanism. Asn-154 serves as the catalytic For ring-opening step. Catalysis depends on His-156, which acts as the Proton acceptor; for ring-opening step. Residue Glu-161 is the For ring-opening step of the active site.

Belongs to the glucosamine/galactosamine-6-phosphate isomerase family.

The protein is Putative deaminase AgaI (agaI) of Escherichia coli (strain K12).